A 201-amino-acid polypeptide reads, in one-letter code: Small ribosomal subunit protein uS4 (201 aa).

One can recognise an S4 RNA-binding domain in the interval 91 to 157 (SRLDNVIYRA…VPFQIARETV (67 aa)).

The protein belongs to the universal ribosomal protein uS4 family. In terms of assembly, part of the 30S ribosomal subunit. Contacts protein S5. The interaction surface between S4 and S5 is involved in control of translational fidelity.

One of the primary rRNA binding proteins, it binds directly to 16S rRNA where it nucleates assembly of the body of the 30S subunit. In terms of biological role, with S5 and S12 plays an important role in translational accuracy. The sequence is that of Small ribosomal subunit protein uS4 from Mycobacterium leprae (strain Br4923).